A 681-amino-acid polypeptide reads, in one-letter code: DNA ligase (681 aa).

Residues 45 to 49 (DFDFD), 94 to 95 (SL), and Glu120 each bind NAD(+). Lys122 functions as the N6-AMP-lysine intermediate in the catalytic mechanism. Residues Arg143, Glu177, Lys289, and Lys313 each contribute to the NAD(+) site. Zn(2+)-binding residues include Cys403, Cys406, Cys421, and Cys426. The region spanning 593–681 (ADQQPFAGQS…SLKIDFKNLI (89 aa)) is the BRCT domain.

It belongs to the NAD-dependent DNA ligase family. LigA subfamily. Mg(2+) serves as cofactor. The cofactor is Mn(2+).

It carries out the reaction NAD(+) + (deoxyribonucleotide)n-3'-hydroxyl + 5'-phospho-(deoxyribonucleotide)m = (deoxyribonucleotide)n+m + AMP + beta-nicotinamide D-nucleotide.. Its function is as follows. DNA ligase that catalyzes the formation of phosphodiester linkages between 5'-phosphoryl and 3'-hydroxyl groups in double-stranded DNA using NAD as a coenzyme and as the energy source for the reaction. It is essential for DNA replication and repair of damaged DNA. This Leptospira interrogans serogroup Icterohaemorrhagiae serovar copenhageni (strain Fiocruz L1-130) protein is DNA ligase.